The primary structure comprises 427 residues: Galactose-3-O-sulfotransferase 3 (427 aa).

The Cytoplasmic portion of the chain corresponds to methionine 1 to isoleucine 19. Residues leucine 20–serine 40 form a helical; Signal-anchor for type II membrane protein membrane-spanning segment. Over tryptophan 41 to histidine 427 the chain is Lumenal. 4 N-linked (GlcNAc...) asparagine glycosylation sites follow: asparagine 90, asparagine 109, asparagine 176, and asparagine 301. A disordered region spans residues methionine 404–histidine 427.

This sequence belongs to the galactose-3-O-sulfotransferase family. It depends on Mg(2+) as a cofactor.

It is found in the golgi apparatus. It localises to the golgi stack membrane. The protein operates within protein modification; carbohydrate sulfation. Its function is as follows. Transfers a sulfate to position 3 of non-reducing beta-galactosyl residues in N-glycans and core2-branched O-glycans. Has high activity towards Gal-beta-1,4-GlcNAc, Gal-beta-1,4(Fuc-alpha-1,3)GlcNAc and lower activity towards Gal-beta-1,3(Fuc-alpha-1,4)GlcNAc. In Bos taurus (Bovine), this protein is Galactose-3-O-sulfotransferase 3 (GAL3ST3).